Consider the following 427-residue polypeptide: Trigger factor (427 aa).

The 86-residue stretch at 163 to 248 (GDTVVIDFVG…VHEVKAKEVP (86 aa)) folds into the PPIase FKBP-type domain.

Belongs to the FKBP-type PPIase family. Tig subfamily.

It localises to the cytoplasm. The catalysed reaction is [protein]-peptidylproline (omega=180) = [protein]-peptidylproline (omega=0). Functionally, involved in protein export. Acts as a chaperone by maintaining the newly synthesized protein in an open conformation. Functions as a peptidyl-prolyl cis-trans isomerase. This Streptococcus equi subsp. zooepidemicus (strain H70) protein is Trigger factor.